Consider the following 303-residue polypeptide: Putative HTH-type transcriptional regulatory protein Mpal_0031 (303 aa).

One can recognise an HTH cro/C1-type domain in the interval 132–189 (LRGLREQRNMSLGDLGAVLGVSRRTISKYESGMGTTLEIAIKIEEVFDSGVIESIDLL). Positions 143-162 (LGDLGAVLGVSRRTISKYES) form a DNA-binding region, H-T-H motif.

In Methanosphaerula palustris (strain ATCC BAA-1556 / DSM 19958 / E1-9c), this protein is Putative HTH-type transcriptional regulatory protein Mpal_0031.